We begin with the raw amino-acid sequence, 277 residues long: N-acetylmuramic acid 6-phosphate etherase (277 aa).

The region spanning 53 to 216 (IIPRVKKGGR…STTIMIELGR (164 aa)) is the SIS domain. Glutamate 81 functions as the Proton donor in the catalytic mechanism. Glutamate 112 is a catalytic residue.

Belongs to the GCKR-like family. MurNAc-6-P etherase subfamily. Homodimer.

It carries out the reaction N-acetyl-D-muramate 6-phosphate + H2O = N-acetyl-D-glucosamine 6-phosphate + (R)-lactate. It participates in amino-sugar metabolism; N-acetylmuramate degradation. In terms of biological role, specifically catalyzes the cleavage of the D-lactyl ether substituent of MurNAc 6-phosphate, producing GlcNAc 6-phosphate and D-lactate. In Bacteroides thetaiotaomicron (strain ATCC 29148 / DSM 2079 / JCM 5827 / CCUG 10774 / NCTC 10582 / VPI-5482 / E50), this protein is N-acetylmuramic acid 6-phosphate etherase.